A 101-amino-acid chain; its full sequence is Apolipoprotein C-II (101 aa).

An N-terminal signal peptide occupies residues 1–22; the sequence is MGTRCLLVLLLVLLVLKCEVQG. The propeptide at 23–28 is removed in mature form; the sequence is DDMARQ. Positions 66 to 74 are lipid binding; that stretch reads AMDEKIRDM. The segment at 78-101 is lipoprotein lipase cofactor; that stretch reads STAAVRIYTGILTDQILSMLTGDP.

The protein belongs to the apolipoprotein C2 family. Post-translationally, proapolipoprotein C-II is synthesized as a sialic acid containing glycoprotein which is subsequently desialylated prior to its proteolytic processing. In terms of processing, proapolipoprotein C-II, the major form found in plasma undergoes proteolytic cleavage of its N-terminal hexapeptide to generate the mature form apolipoprotein C-II, which occurs as the minor form in plasma.

It is found in the secreted. Its function is as follows. Component of chylomicrons, very low-density lipoproteins (VLDL), low-density lipoproteins (LDL), and high-density lipoproteins (HDL) in plasma. Plays an important role in lipoprotein metabolism as an activator of lipoprotein lipase, the enzyme which hydrolyzes the triacylglycerols on chylomicrons and VLDL. This is Apolipoprotein C-II (APOC2) from Panthera tigris altaica (Siberian tiger).